The sequence spans 65 residues: Large ribosomal subunit protein bL35 (65 aa).

2 stretches are compositionally biased toward basic residues: residues Met-1–Thr-15 and Gln-26–Leu-44. Residues Met-1–Ala-65 form a disordered region.

This sequence belongs to the bacterial ribosomal protein bL35 family.

The protein is Large ribosomal subunit protein bL35 of Ralstonia nicotianae (strain ATCC BAA-1114 / GMI1000) (Ralstonia solanacearum).